The primary structure comprises 464 residues: ATP synthase subunit beta (464 aa).

152–159 (GGAGVGKT) is an ATP binding site.

It belongs to the ATPase alpha/beta chains family. F-type ATPases have 2 components, CF(1) - the catalytic core - and CF(0) - the membrane proton channel. CF(1) has five subunits: alpha(3), beta(3), gamma(1), delta(1), epsilon(1). CF(0) has three main subunits: a(1), b(2) and c(9-12). The alpha and beta chains form an alternating ring which encloses part of the gamma chain. CF(1) is attached to CF(0) by a central stalk formed by the gamma and epsilon chains, while a peripheral stalk is formed by the delta and b chains.

The protein resides in the cell membrane. The enzyme catalyses ATP + H2O + 4 H(+)(in) = ADP + phosphate + 5 H(+)(out). Functionally, produces ATP from ADP in the presence of a proton gradient across the membrane. The catalytic sites are hosted primarily by the beta subunits. This Clostridioides difficile (strain 630) (Peptoclostridium difficile) protein is ATP synthase subunit beta.